The sequence spans 350 residues: tRNA dimethylallyltransferase (350 aa).

Position 34-41 (34-41) interacts with ATP; it reads GPTASGKT. 36–41 is a substrate binding site; it reads TASGKT. Interaction with substrate tRNA regions lie at residues 63-66, 187-191, and 274-279; these read DSAL, QRIQR, and RCVGYR.

The protein belongs to the IPP transferase family. In terms of assembly, monomer. Mg(2+) serves as cofactor.

It carries out the reaction adenosine(37) in tRNA + dimethylallyl diphosphate = N(6)-dimethylallyladenosine(37) in tRNA + diphosphate. Its function is as follows. Catalyzes the transfer of a dimethylallyl group onto the adenine at position 37 in tRNAs that read codons beginning with uridine, leading to the formation of N6-(dimethylallyl)adenosine (i(6)A). The sequence is that of tRNA dimethylallyltransferase from Paracidovorax citrulli (strain AAC00-1) (Acidovorax citrulli).